The chain runs to 493 residues: Solute carrier family 2, facilitated glucose transporter member 3 (493 aa).

The Cytoplasmic segment spans residues 1–10 (MGTTKVTPSL). A helical membrane pass occupies residues 11 to 32 (VFAVTVATIGSFQFGYNTGVIN). The Extracellular portion of the chain corresponds to 33 to 64 (APETILKDFLNYTLEERLEDLPSEGLLTALWS). N-linked (GlcNAc...) asparagine glycosylation is present at N43. A helical membrane pass occupies residues 65 to 85 (LCVAIFSVGGMIGSFSVGLFV). Topologically, residues 86 to 90 (NRFGR) are cytoplasmic. The chain crosses the membrane as a helical span at residues 91–111 (RNSMLLVNLLAIIAGCLMGFA). At 112–118 (KIAESVE) the chain is on the extracellular side. A helical membrane pass occupies residues 119-142 (MLILGRLLIGIFCGLCTGFVPMYI). The Cytoplasmic segment spans residues 143–153 (GEVSPTALRGA). Residues 154–174 (FGTLNQLGIVVGILVAQIFGL) traverse the membrane as a helical segment. Q159 is a binding site for D-glucose. The Extracellular portion of the chain corresponds to 175–183 (DFILGSEEL). Residues 184–204 (WPGLLGLTIIPAILQSAALPF) form a helical membrane-spanning segment. The Cytoplasmic segment spans residues 205–269 (CPESPRFLLI…LFRSPNYVQP (65 aa)). At T232 the chain carries Phosphothreonine. Residues 270-290 (LLISIVLQLSQQLSGINAVFY) form a helical membrane-spanning segment. The tract at residues 277–279 (QLS) is important for selectivity against fructose. Residues 280-281 (QQ) and N286 each bind D-glucose. At 291–304 (YSTGIFKDAGVQEP) the chain is on the extracellular side. A helical membrane pass occupies residues 305 to 325 (IYATIGAGVVNTIFTVVSLFL). N315 serves as a coordination point for D-glucose. Over 326 to 331 (VERAGR) the chain is Cytoplasmic. Residues 332-352 (RTLHMIGLGGMAVCSVFMTIS) traverse the membrane as a helical segment. At 353 to 363 (LLLKDDYEAMS) the chain is on the extracellular side. The chain crosses the membrane as a helical span at residues 364 to 389 (FVCIVAILIYVAFFEIGPGPIPWFIV). Residues E378 and W386 each contribute to the D-glucose site. The Cytoplasmic segment spans residues 390–399 (AELFSQGPRP). The chain crosses the membrane as a helical span at residues 400–420 (AAIAVAGCCNWTSNFLVGMLF). Residues 421–429 (PSAAAYLGA) are Extracellular-facing. A helical transmembrane segment spans residues 430–450 (YVFIIFAAFLIFFLIFTFFKV). Residues 451-493 (PETKGRTFEDIARAFEGQAHSGKGPAGVELNSMQPVKETPGNA) are Cytoplasmic-facing. The segment at 469–493 (AHSGKGPAGVELNSMQPVKETPGNA) is disordered. Phosphoserine occurs at positions 471 and 482. T489 is modified (phosphothreonine).

This sequence belongs to the major facilitator superfamily. Sugar transporter (TC 2.A.1.1) family. Glucose transporter subfamily. Interacts with SMIM43; the interaction may promote SLC2A3-mediated glucose transport to meet the energy needs of mesendoderm differentiation. As to expression, expressed in spermatozoa (at protein level). Detected in brain (at protein level). Abundantly expressed in the hippocampus, cerebellum and cerebral cortex with lower expression in the dentate gyrus and piriform cortex.

It is found in the cell membrane. It localises to the perikaryon. The protein localises to the cell projection. The enzyme catalyses D-glucose(out) = D-glucose(in). It carries out the reaction D-galactose(in) = D-galactose(out). Its activity is regulated as follows. Deoxyglucose transport is inhibited by D-glucose, D-galactose and maltose. Galactose transport is inhibited by D-glucose and maltose. Its function is as follows. Facilitative glucose transporter. Can also mediate the uptake of various other monosaccharides across the cell membrane. Mediates the uptake of glucose, 2-deoxyglucose, galactose, mannose, xylose and fucose, and probably also dehydroascorbate. Does not mediate fructose transport. Required for mesendoderm differentiation. The chain is Solute carrier family 2, facilitated glucose transporter member 3 from Mus musculus (Mouse).